The following is a 569-amino-acid chain: TBCC domain-containing protein 1 (569 aa).

One can recognise a C-CAP/cofactor C-like domain in the interval 304–435; it reads PRSHRIVVMS…LEDHMARTGL (132 aa).

It belongs to the TBCC family.

The protein localises to the cytoplasm. It localises to the cytoskeleton. Its subcellular location is the microtubule organizing center. It is found in the centrosome. The protein resides in the spindle pole. Plays a role in the regulation of centrosome and Golgi apparatus positioning, with consequences on cell shape and cell migration. This Rattus norvegicus (Rat) protein is TBCC domain-containing protein 1 (Tbccd1).